The chain runs to 261 residues: uncharacterized protein (261 aa).

Residues Met1–Ile12 are compositionally biased toward polar residues. Positions Met1 to Thr139 are disordered. Positions Ser23–Ser55 are enriched in low complexity. Over residues Ser65 to Tyr74 the composition is skewed to basic and acidic residues. Positions Tyr79–Val108 are enriched in acidic residues. Residues Asp122–Thr139 show a composition bias toward basic and acidic residues. Coiled coils occupy residues Met151–Leu181 and Glu218–Glu243.

This is an uncharacterized protein from Acanthamoeba polyphaga (Amoeba).